Here is a 530-residue protein sequence, read N- to C-terminus: Hyalin (530 aa).

HYR domains are found at residues 1-66 (NVEI…TVTA), 67-150 (TDSI…NVVE), 151-234 (VDTT…NVVE), 235-319 (VDTT…NVVE), 320-403 (VDTT…NIVE), 404-486 (EDTT…TVNT), and 487-530 (VDTT…ASLV).

Homooligomer in presence of calcium. Post-translationally, glycosylated.

It is found in the secreted. It localises to the extracellular space. The protein resides in the extracellular matrix. Its function is as follows. Major constituent of the hyaline layer. The hyaline layer of echinoderm embryos is an extraembryonic matrix that functions as a substrate for cell adhesion through early development. The protein is Hyalin of Lytechinus variegatus (Green sea urchin).